The sequence spans 469 residues: Probable Xaa-Pro aminopeptidase PEPP (469 aa).

4 residues coordinate Mn(2+): aspartate 264, aspartate 275, glutamate 398, and glutamate 438.

This sequence belongs to the peptidase M24B family. It depends on Mn(2+) as a cofactor.

It catalyses the reaction Release of any N-terminal amino acid, including proline, that is linked to proline, even from a dipeptide or tripeptide.. In terms of biological role, catalyzes the removal of a penultimate prolyl residue from the N-termini of peptides. In Ajellomyces capsulatus (strain H143) (Darling's disease fungus), this protein is Probable Xaa-Pro aminopeptidase PEPP (PEPP).